The following is a 309-amino-acid chain: Maintenance of mitochondrial morphology protein 1 (309 aa).

Residues 1-16 (MGNAYIFSLQPTFTQG) lie on the Lumenal side of the membrane. Residues 17–37 (LILGQFSILFLLVLVLKYLFF) traverse the membrane as a helical segment. Residues 38-309 (DTVSDHAYRT…EQQAGELPVN (272 aa)) lie on the Cytoplasmic side of the membrane. The region spanning 84-293 (ECESADWLNA…LPGLASVSEV (210 aa)) is the SMP-LTD domain.

It belongs to the MMM1 family. Homodimer. Component of the ER-mitochondria encounter structure (ERMES) or MDM complex, composed of MMM1, MDM10, MDM12 and MDM34. An MMM1 homodimer associates with one molecule of MDM12 on each side in a pairwise head-to-tail manner, and the SMP-LTD domains of MMM1 and MDM12 generate a continuous hydrophobic tunnel for phospholipid trafficking.

Its subcellular location is the endoplasmic reticulum membrane. In terms of biological role, component of the ERMES/MDM complex, which serves as a molecular tether to connect the endoplasmic reticulum (ER) and mitochondria. Components of this complex are involved in the control of mitochondrial shape and protein biogenesis, and function in nonvesicular lipid trafficking between the ER and mitochondria. The MDM12-MMM1 subcomplex functions in the major beta-barrel assembly pathway that is responsible for biogenesis of all outer membrane beta-barrel proteins, and acts in a late step after the SAM complex. The MDM10-MDM12-MMM1 subcomplex further acts in the TOM40-specific pathway after the action of the MDM12-MMM1 complex. Essential for establishing and maintaining the structure of mitochondria and maintenance of mtDNA nucleoids. The sequence is that of Maintenance of mitochondrial morphology protein 1 from Postia placenta (strain ATCC 44394 / Madison 698-R) (Brown rot fungus).